The chain runs to 82 residues: ATP synthase subunit c, chloroplastic (82 aa).

A run of 2 helical transmembrane segments spans residues 7-27 (GASVIAAGLAIGLASIGPGIG) and 57-77 (LAFMESLTIYGLVVALCLLFA).

It belongs to the ATPase C chain family. F-type ATPases have 2 components, F(1) - the catalytic core - and F(0) - the membrane proton channel. F(1) has five subunits: alpha(3), beta(3), gamma(1), delta(1), epsilon(1). F(0) has four main subunits: a(1), b(1), b'(1) and c(10-14). The alpha and beta chains form an alternating ring which encloses part of the gamma chain. F(1) is attached to F(0) by a central stalk formed by the gamma and epsilon chains, while a peripheral stalk is formed by the delta, b and b' chains.

The protein localises to the plastid. The protein resides in the chloroplast thylakoid membrane. Its function is as follows. F(1)F(0) ATP synthase produces ATP from ADP in the presence of a proton or sodium gradient. F-type ATPases consist of two structural domains, F(1) containing the extramembraneous catalytic core and F(0) containing the membrane proton channel, linked together by a central stalk and a peripheral stalk. During catalysis, ATP synthesis in the catalytic domain of F(1) is coupled via a rotary mechanism of the central stalk subunits to proton translocation. Key component of the F(0) channel; it plays a direct role in translocation across the membrane. A homomeric c-ring of between 10-14 subunits forms the central stalk rotor element with the F(1) delta and epsilon subunits. The polypeptide is ATP synthase subunit c, chloroplastic (Emiliania huxleyi (Coccolithophore)).